Here is a 92-residue protein sequence, read N- to C-terminus: Bombyxin A-1 (92 aa).

Positions 1–19 (MKILLAIALMLSTVMWVST) are cleaved as a signal peptide. Gln20 is subject to Pyrrolidone carboxylic acid. Intrachain disulfides connect Cys29–Cys79, Cys41–Cys92, and Cys78–Cys83. A propeptide spans 50–70 (SGAQFASYGSAWLMPYSEGRG) (c peptide like).

The protein belongs to the insulin family. Heterodimer of a B chain and an A chain linked by two disulfide bonds.

Its subcellular location is the secreted. Its function is as follows. Brain peptide responsible for activation of prothoracic glands to produce ecdysone in insects. This chain is Bombyxin A-1 (BBXA1), found in Bombyx mori (Silk moth).